Here is a 676-residue protein sequence, read N- to C-terminus: Mucin-1 (676 aa).

A signal peptide spans 1 to 25; that stretch reads MTPGIRAPFLLTLLLALVTDPNSVA. The disordered stretch occupies residues 25–387; that stretch reads ALSQDTSSSS…VHNGSLVPTT (363 aa). Residues 26–582 lie on the Extracellular side of the membrane; the sequence is LSQDTSSSST…QSWPGVPGWG (557 aa). 13 consecutive repeat copies span residues 40–59, 60–79, 80–99, 100–119, 120–139, 140–159, 160–179, 180–199, 200–219, 220–239, 240–259, 260–279, and 280–299. The 13 X approximate tandem repeats of P-V-H-S-G-S-S-A-P-P-T-S-S-A-V-N-S-A-T-T stretch occupies residues 40–314; the sequence is PVHSGSSAPA…SSMQTTEAIS (275 aa). O-linked (GalNAc...) serine glycosylation is found at serine 43, serine 45, and serine 46. A glycan (O-linked (GalNAc...) threonine) is linked at threonine 50. O-linked (GalNAc...) serine glycosylation is found at serine 51, serine 52, and serine 56. O-linked (GalNAc...) threonine glycans are attached at residues threonine 58 and threonine 59. N-linked (GlcNAc...) asparagine glycosylation is found at asparagine 291, asparagine 323, asparagine 350, asparagine 380, asparagine 400, asparagine 413, asparagine 435, asparagine 479, asparagine 496, and asparagine 536. Residues 404–420 are compositionally biased toward polar residues; it reads TMATTTPVGNGTQSSVP. Residues 404 to 434 are disordered; that stretch reads TMATTTPVGNGTQSSVPSRHPVTPTPPAVSS. The SEA domain maps to 463–570; that stretch reads GVSFFLLSFH…INVGEMQFPS (108 aa). Residues 583-603 traverse the membrane as a helical segment; that stretch reads IALLVLVCILVALAIVYLIAL. Residues 604–676 are Cytoplasmic-facing; that stretch reads AVCQCRRKNY…PVVATTSANL (73 aa). 2 S-palmitoyl cysteine lipidation sites follow: cysteine 606 and cysteine 608. Residues 614 to 650 form an interaction with P53 region; that stretch reads GQLDIFPIQDSYHPMSEYPTYHTHGRYVPPGSTKRSP. Tyrosine 625 carries the post-translational modification Phosphotyrosine; by PDGFR. The Interaction with GRB2 signature appears at 625–628; the sequence is YHPM. Tyrosine 634 carries the phosphotyrosine modification. The disordered stretch occupies residues 636–659; the sequence is THGRYVPPGSTKRSPYEEVSAGNG. A Phosphotyrosine; by PDGFR modification is found at tyrosine 640. The tract at residues 645-652 is required for interaction with GSK3B; it reads STKRSPYE. Threonine 646 bears the Phosphothreonine; by PKC/PRKCD mark. Serine 649 carries the post-translational modification Phosphoserine; by GSK3-beta. A Phosphotyrosine; by CSK, EGFR and SRC modification is found at tyrosine 651. Positions 651 to 654 match the Interaction with SRC and ESR1 motif; that stretch reads YEEV. The segment at 655-662 is required for interaction with beta- and gamma-catenins; sequence SAGNGSSL. A Phosphotyrosine modification is found at tyrosine 664. The Required for interaction with AP1S2 signature appears at 664-667; that stretch reads YTNP.

In terms of assembly, the alpha subunit forms a tight, non-covalent heterodimeric complex with the proteolytically-released beta-subunit. Binds directly the SH2 domain of GRB2, and forms a MUC1/GRB2/SOS1 complex involved in RAS signaling. The cytoplasmic tail (MUC1CT) interacts with several proteins such as SRC, CTNNB1 and ERBs. Interaction with the SH2 domain of CSK decreases interaction with GSK3B. Interacts with CTNNB1/beta-catenin and JUP/gamma-catenin and promotes cell adhesion. Interaction with JUP/gamma-catenin is induced by heregulin. Binds PRKCD, ERBB2, ERBB3 and ERBB4. Heregulin (HRG) stimulates the interaction with ERBB2 and, to a much lesser extent, the interaction with ERBB3 and ERBB4. Interacts with P53 in response to DNA damage. Interacts with KLF4. Interacts with estrogen receptor alpha/ESR1, through its DNA-binding domain, and stimulates its transcription activity. Binds ADAM17. Probably both N- and O-glycosylated (in repeat region). In terms of processing, proteolytic cleavage in the SEA domain occurs in the endoplasmic reticulum by an autoproteolytic mechanism and requires the full-length SEA domain as well as requiring a Ser, Thr or Cys residue at the P + 1 site. Ectodomain shedding is mediated by ADAM17 in uterine epithelial cells. Post-translationally, dual palmitoylation on cysteine residues in the CQC motif is required for recycling from endosomes back to the plasma membrane. Phosphorylated on tyrosines and serine residues in the C-terminal. Phosphorylation on tyrosines in the C-terminal increases the nuclear location of MUC1 and beta-catenin. Phosphorylation by PKC delta induces binding of MUC1 to beta-catenin/CTNNB1 and thus decreases the formation of the beta-catenin/E-cadherin complex. Src-mediated phosphorylation inhibits interaction with GSK3B. Csk- or Src- or EGFR-mediated phosphorylation on Tyr-651 increases binding to beta-catenin/CTNNB1. GSK3B-mediated phosphorylation on Ser-649 decreases this interaction but restores the formation of the beta-cadherin/E-cadherin complex. On T-cell receptor activation, phosphorylated by LCK. PDGFR-mediated phosphorylation increases nuclear colocalization of MUC1CT and CTNNB1.

Its subcellular location is the apical cell membrane. It is found in the cell membrane. The protein resides in the cytoplasm. The protein localises to the nucleus. Its function is as follows. The alpha subunit has cell adhesive properties. Can act both as an adhesion and an anti-adhesion protein. May provide a protective layer on epithelial cells against bacterial and enzyme attack. In terms of biological role, the beta subunit contains a C-terminal domain which is involved in cell signaling, through phosphorylations and protein-protein interactions. Modulates signaling in ERK, Src and NF-kappaB pathways. In activated T-cells, influences directly or indirectly the Ras/MAPK pathway. Promotes tumor progression. Regulates P53-mediated transcription and determines cell fate in the genotoxic stress response. Binds, together with KLF4, the PE21 promoter element of P53 and represses P53 activity. The sequence is that of Mucin-1 (MUC1) from Mesocricetus auratus (Golden hamster).